Here is a 210-residue protein sequence, read N- to C-terminus: Mating-type-like protein ALPHA2, silenced copy at MTL3 (210 aa).

The homeobox; TALE-type DNA-binding region spans A108 to Y170.

Belongs to the TALE/M-ATYP homeobox family.

The protein localises to the nucleus. Functionally, mating type proteins are sequence specific DNA-binding proteins that act as master switches in yeast differentiation by controlling gene expression in a cell type-specific fashion. The polypeptide is Mating-type-like protein ALPHA2, silenced copy at MTL3 (MTL3alpha2) (Candida glabrata (strain ATCC 2001 / BCRC 20586 / JCM 3761 / NBRC 0622 / NRRL Y-65 / CBS 138) (Yeast)).